The sequence spans 121 residues: Homeobox protein HD-6 (121 aa).

The segment at residues 28-87 (PKRSRIQLHDWQSMLLEHSFRMNPYPDRIEKYNLFLKTKIPMKNVKIWFQNRRAREKSFY) is a DNA-binding region (homeobox).

It localises to the nucleus. The polypeptide is Homeobox protein HD-6 (HD-6) (Encephalitozoon cuniculi (strain GB-M1) (Microsporidian parasite)).